Reading from the N-terminus, the 386-residue chain is Succinate--CoA ligase [ADP-forming] subunit beta (386 aa).

Residues 9-244 (KELLRSYGVP…ETEEDPREVE (236 aa)) form the ATP-grasp domain. Residues lysine 46, 53–55 (GRG), glutamate 99, cysteine 102, and glutamate 107 contribute to the ATP site. The Mg(2+) site is built by asparagine 199 and aspartate 213. Residues asparagine 264 and 321–323 (GIM) contribute to the substrate site.

The protein belongs to the succinate/malate CoA ligase beta subunit family. As to quaternary structure, heterotetramer of two alpha and two beta subunits. Mg(2+) serves as cofactor.

The enzyme catalyses succinate + ATP + CoA = succinyl-CoA + ADP + phosphate. It catalyses the reaction GTP + succinate + CoA = succinyl-CoA + GDP + phosphate. Its pathway is carbohydrate metabolism; tricarboxylic acid cycle; succinate from succinyl-CoA (ligase route): step 1/1. Its function is as follows. Succinyl-CoA synthetase functions in the citric acid cycle (TCA), coupling the hydrolysis of succinyl-CoA to the synthesis of either ATP or GTP and thus represents the only step of substrate-level phosphorylation in the TCA. The beta subunit provides nucleotide specificity of the enzyme and binds the substrate succinate, while the binding sites for coenzyme A and phosphate are found in the alpha subunit. The chain is Succinate--CoA ligase [ADP-forming] subunit beta from Exiguobacterium sibiricum (strain DSM 17290 / CCUG 55495 / CIP 109462 / JCM 13490 / 255-15).